Consider the following 119-residue polypeptide: UPF0102 protein Athe_0977 (119 aa).

It belongs to the UPF0102 family.

The protein is UPF0102 protein Athe_0977 of Caldicellulosiruptor bescii (strain ATCC BAA-1888 / DSM 6725 / KCTC 15123 / Z-1320) (Anaerocellum thermophilum).